The sequence spans 898 residues: Translation initiation factor IF-2 (898 aa).

The segment at 51 to 302 is disordered; sequence KEHGDATGSE…RKGRINKPMS (252 aa). Basic and acidic residues-rich tracts occupy residues 100 to 164 and 171 to 230; these read SSVE…KRET and RSDE…KETV. Positions 234 to 245 are enriched in polar residues; sequence QENTDYHVTTSR. Basic residues predominate over residues 263 to 273; sequence RRSTKANKRKM. Basic and acidic residues predominate over residues 274–286; that stretch reads SSRDDNQERDSRP. Residues 287-297 show a composition bias toward basic residues; sequence RGGKAGRKGRI. One can recognise a tr-type G domain in the interval 397-566; the sequence is SRAPVVTIMG…LLQAEVLELK (170 aa). Residues 406-413 are G1; the sequence is GHVDHGKT. 406–413 contributes to the GTP binding site; the sequence is GHVDHGKT. Residues 431-435 are G2; it reads GITQH. The interval 452–455 is G3; the sequence is DTPG. GTP is bound by residues 452–456 and 506–509; these read DTPGH and NKID. Residues 506–509 form a G4 region; that stretch reads NKID. The segment at 542-544 is G5; sequence SAK.

The protein belongs to the TRAFAC class translation factor GTPase superfamily. Classic translation factor GTPase family. IF-2 subfamily.

Its subcellular location is the cytoplasm. Functionally, one of the essential components for the initiation of protein synthesis. Protects formylmethionyl-tRNA from spontaneous hydrolysis and promotes its binding to the 30S ribosomal subunits. Also involved in the hydrolysis of GTP during the formation of the 70S ribosomal complex. This chain is Translation initiation factor IF-2, found in Vibrio cholerae serotype O1 (strain ATCC 39541 / Classical Ogawa 395 / O395).